The following is a 452-amino-acid chain: Bifunctional protein GlmU (452 aa).

The tract at residues 1 to 224 is pyrophosphorylase; sequence MNIVILAAGM…VWETHGVNSK (224 aa). Residues 6-9, K20, Q71, 76-77, 98-100, G135, E149, N164, and N222 contribute to the UDP-N-acetyl-alpha-D-glucosamine site; these read LAAG, GT, and YGD. D100 provides a ligand contact to Mg(2+). Residue N222 coordinates Mg(2+). Positions 225–245 are linker; the sequence is VQLAELERVHQNNIARALLEH. Residues 246 to 452 form an N-acetyltransferase region; that stretch reads GVTLADPARI…GWQRPVKIKK (207 aa). Residues R328 and K346 each contribute to the UDP-N-acetyl-alpha-D-glucosamine site. The Proton acceptor role is filled by H358. The UDP-N-acetyl-alpha-D-glucosamine site is built by Y361 and N372. Acetyl-CoA-binding positions include A375, 381 to 382, S400, A418, and R435; that span reads NY.

This sequence in the N-terminal section; belongs to the N-acetylglucosamine-1-phosphate uridyltransferase family. It in the C-terminal section; belongs to the transferase hexapeptide repeat family. In terms of assembly, homotrimer. Mg(2+) is required as a cofactor.

The protein resides in the cytoplasm. It carries out the reaction alpha-D-glucosamine 1-phosphate + acetyl-CoA = N-acetyl-alpha-D-glucosamine 1-phosphate + CoA + H(+). The enzyme catalyses N-acetyl-alpha-D-glucosamine 1-phosphate + UTP + H(+) = UDP-N-acetyl-alpha-D-glucosamine + diphosphate. The protein operates within nucleotide-sugar biosynthesis; UDP-N-acetyl-alpha-D-glucosamine biosynthesis; N-acetyl-alpha-D-glucosamine 1-phosphate from alpha-D-glucosamine 6-phosphate (route II): step 2/2. It functions in the pathway nucleotide-sugar biosynthesis; UDP-N-acetyl-alpha-D-glucosamine biosynthesis; UDP-N-acetyl-alpha-D-glucosamine from N-acetyl-alpha-D-glucosamine 1-phosphate: step 1/1. It participates in bacterial outer membrane biogenesis; LPS lipid A biosynthesis. Catalyzes the last two sequential reactions in the de novo biosynthetic pathway for UDP-N-acetylglucosamine (UDP-GlcNAc). The C-terminal domain catalyzes the transfer of acetyl group from acetyl coenzyme A to glucosamine-1-phosphate (GlcN-1-P) to produce N-acetylglucosamine-1-phosphate (GlcNAc-1-P), which is converted into UDP-GlcNAc by the transfer of uridine 5-monophosphate (from uridine 5-triphosphate), a reaction catalyzed by the N-terminal domain. The polypeptide is Bifunctional protein GlmU (Herminiimonas arsenicoxydans).